We begin with the raw amino-acid sequence, 306 residues long: Aquaporin-1 (306 aa).

Positions 1 to 23 (MASTHSSLTTVQNNANNKSNRTL) are enriched in polar residues. Residues 1 to 24 (MASTHSSLTTVQNNANNKSNRTLN) are disordered. Residues 1 to 59 (MASTHSSLTTVQNNANNKSNRTLNTERRLSMESSVFTLYNKAADELDTSQRSAFQACHR) are Cytoplasmic-facing. Residues 60–80 (EFLAEFIGTVILVLLTCGFCA) form a helical membrane-spanning segment. Topologically, residues 81-92 (EQTLHIEESKSW) are extracellular. A helical transmembrane segment spans residues 93-113 (LTSSFGSGLSVLIGICVSGHV). Over 114–145 (SGAHLNPAVTIAFCIFSGFPIRKVPSYITAQL) the chain is Cytoplasmic. Positions 119–121 (NPA) match the NPA 1 motif. The helical transmembrane segment at 146–166 (LGAFAGAALLYIIIEPAIVQF) threads the bilayer. The Extracellular segment spans residues 167–192 (DGGQRYILGEKSTAGIFGTYPPLYVG). A helical membrane pass occupies residues 193-213 (IGSAIASEIMGTAMLLLVIMV). At 214 to 226 (TGHPNNLPYKSAQ) the chain is on the cytoplasmic side. Residues 227-247 (GAMIALGITTISLCIGYTSGF) traverse the membrane as a helical segment. The Extracellular portion of the chain corresponds to 248-278 (SLNPARDFGPRLFTAIAGWGFDVFKVYHYYA). The NPA 2 signature appears at 250 to 252 (NPA). The helical transmembrane segment at 279–299 (LVPMFAPILGGLVGLMLMMPF) threads the bilayer. Over 300-306 (SFLSVRA) the chain is Cytoplasmic.

The protein belongs to the MIP/aquaporin (TC 1.A.8) family.

It is found in the cell membrane. The enzyme catalyses H2O(in) = H2O(out). Water channel required to facilitate the transport of water across membranes. Contributes to water uptake of spores during the early stages of spore germination. Aquaporins AQP1 and AQP2 act as extracellular pH sensors and enable the spores to hydrate under favorable conditions and to commence germination. Wounded vegetables and fruit present acidic pH, so the optimal pH range for germination is adapted to the relevant host pH. The protein is Aquaporin-1 of Rhizopus delemar (strain RA 99-880 / ATCC MYA-4621 / FGSC 9543 / NRRL 43880) (Mucormycosis agent).